Reading from the N-terminus, the 81-residue chain is ATP synthase subunit C, cyanelle (81 aa).

A run of 2 helical transmembrane segments spans residues 7-27 and 57-77; these read AASVIAAALAVGLAAIGPGIG and LAFMEALTIYGLVVALALLFA.

Belongs to the ATPase C chain family. F-type ATPases have 2 components, F(1) - the catalytic core - and F(0) - the membrane proton channel. F(1) has five subunits: alpha(3), beta(3), gamma(1), delta(1), epsilon(1). F(0) has four main subunits: a(1), b(1), b'(1) and c(10-14). The alpha and beta chains form an alternating ring which encloses part of the gamma chain. F(1) is attached to F(0) by a central stalk formed by the gamma and epsilon chains, while a peripheral stalk is formed by the delta, b and b' chains.

It localises to the plastid. The protein resides in the cyanelle thylakoid membrane. In terms of biological role, f(1)F(0) ATP synthase produces ATP from ADP in the presence of a proton or sodium gradient. F-type ATPases consist of two structural domains, F(1) containing the extramembraneous catalytic core and F(0) containing the membrane proton channel, linked together by a central stalk and a peripheral stalk. During catalysis, ATP synthesis in the catalytic domain of F(1) is coupled via a rotary mechanism of the central stalk subunits to proton translocation. Its function is as follows. Key component of the F(0) channel; it plays a direct role in translocation across the membrane. A homomeric c-ring of between 10-14 subunits forms the central stalk rotor element with the F(1) delta and epsilon subunits. The polypeptide is ATP synthase subunit C, cyanelle (Cyanophora paradoxa).